Reading from the N-terminus, the 1110-residue chain is ATP-dependent DNA helicase MPH1 (1110 aa).

Residues Leu-24–Arg-34 are compositionally biased toward polar residues. Disordered stretches follow at residues Leu-24–Lys-165, Phe-178–Asn-212, and Thr-236–His-305. Basic and acidic residues-rich tracts occupy residues Asn-42–Glu-57 and Phe-178–Ala-188. Residues Glu-189–Gly-199 are compositionally biased toward acidic residues. 2 stretches are compositionally biased toward polar residues: residues Ile-246 to Leu-273 and Gln-287 to Glu-300. In terms of domain architecture, Helicase ATP-binding spans Ile-331–Arg-499. Leu-344–Thr-351 provides a ligand contact to ATP. Residues Asp-447–His-450 carry the DEAH box motif. In terms of domain architecture, Helicase C-terminal spans Ile-675–Ser-846. Disordered stretches follow at residues Glu-867 to Gly-937, Val-1013 to Thr-1055, and Asn-1069 to Glu-1110. A compositionally biased stretch (basic residues) spans Arg-879 to Phe-890. Basic and acidic residues-rich tracts occupy residues His-891–Phe-900, Gln-1041–Thr-1055, and Glu-1077–Pro-1093.

It belongs to the DEAD box helicase family. DEAH subfamily. FANCM sub-subfamily. As to quaternary structure, interacts with the MHF histone-fold complex to form the FANCM-MHF complex.

It localises to the nucleus. It catalyses the reaction ATP + H2O = ADP + phosphate + H(+). Functionally, ATP-dependent DNA helicase involved in DNA damage repair by homologous recombination and in genome maintenance. Capable of unwinding D-loops. Plays a role in limiting crossover recombinants during mitotic DNA double-strand break (DSB) repair. Component of a FANCM-MHF complex which promotes gene conversion at blocked replication forks, probably by reversal of the stalled fork. This Coccidioides immitis (strain RS) (Valley fever fungus) protein is ATP-dependent DNA helicase MPH1.